Reading from the N-terminus, the 383-residue chain is S-adenosylmethionine synthase (383 aa).

His-15 is a binding site for ATP. Asp-17 is a Mg(2+) binding site. Glu-43 provides a ligand contact to K(+). Residues Glu-56 and Gln-99 each contribute to the L-methionine site. Positions 99–109 (QSSDINQGVDR) are flexible loop. Residues 164 to 166 (DAK), 230 to 231 (RF), Asp-239, 245 to 246 (RK), Ala-262, and Lys-266 each bind ATP. Residue Asp-239 participates in L-methionine binding. L-methionine is bound at residue Lys-270.

The protein belongs to the AdoMet synthase family. In terms of assembly, homotetramer; dimer of dimers. Mg(2+) is required as a cofactor. The cofactor is K(+).

It is found in the cytoplasm. It catalyses the reaction L-methionine + ATP + H2O = S-adenosyl-L-methionine + phosphate + diphosphate. The protein operates within amino-acid biosynthesis; S-adenosyl-L-methionine biosynthesis; S-adenosyl-L-methionine from L-methionine: step 1/1. Its function is as follows. Catalyzes the formation of S-adenosylmethionine (AdoMet) from methionine and ATP. The overall synthetic reaction is composed of two sequential steps, AdoMet formation and the subsequent tripolyphosphate hydrolysis which occurs prior to release of AdoMet from the enzyme. The sequence is that of S-adenosylmethionine synthase from Mannheimia succiniciproducens (strain KCTC 0769BP / MBEL55E).